The following is a 509-amino-acid chain: Maturase K (509 aa).

The protein belongs to the intron maturase 2 family. MatK subfamily.

It is found in the plastid. It localises to the chloroplast. In terms of biological role, usually encoded in the trnK tRNA gene intron. Probably assists in splicing its own and other chloroplast group II introns. The protein is Maturase K of Ibicella lutea (Yellow unicorn-plant).